Consider the following 137-residue polypeptide: Large ribosomal subunit protein uL16 (137 aa).

Residues 1 to 17 (MLSPKRVKFRKRQRGRL) show a composition bias toward basic residues. The tract at residues 1–24 (MLSPKRVKFRKRQRGRLKGTDERG) is disordered.

Belongs to the universal ribosomal protein uL16 family. Part of the 50S ribosomal subunit.

Functionally, binds 23S rRNA and is also seen to make contacts with the A and possibly P site tRNAs. The sequence is that of Large ribosomal subunit protein uL16 from Leptospira borgpetersenii serovar Hardjo-bovis (strain JB197).